A 195-amino-acid chain; its full sequence is Transcriptional regulator LdrP (195 aa).

One can recognise an HTH crp-type domain in the interval 110–182 (GELRARIARY…YRRVYLLDLA (73 aa)). The H-T-H motif DNA-binding region spans 142 to 161 (HEEIADATASIRESVSKVLA).

Its function is as follows. Activates transcription. Positively regulates PcrtB promoter upstream of the crtB operon in a cAMP-independent manner. Regulated genes include genes encoding DNA photolyase, phytoene synthase and cytochrome P450 monooxygenase, which are involved in carotenoid biosynthesis. Positively regulates the light-inducible gene cluster in the megaplasmid in a cAMP-independent manner. This is Transcriptional regulator LdrP from Thermus thermophilus (strain ATCC BAA-163 / DSM 7039 / HB27).